The sequence spans 162 residues: Large ribosomal subunit protein uL15 (162 aa).

The tract at residues 1-44 (MKLNELRDNPGATKNRIRVGRGIGSGKGKTAGRGVKGQKSREGV) is disordered. Gly residues predominate over residues 21–35 (RGIGSGKGKTAGRGV).

Belongs to the universal ribosomal protein uL15 family. Part of the 50S ribosomal subunit.

Binds to the 23S rRNA. This chain is Large ribosomal subunit protein uL15, found in Rhodospirillum rubrum (strain ATCC 11170 / ATH 1.1.1 / DSM 467 / LMG 4362 / NCIMB 8255 / S1).